The following is a 1270-amino-acid chain: Myosin-3 (1270 aa).

A disordered region spans residues 1–20; that stretch reads MAVIKKGARRKDVKEPKKRS. Residues 36 to 715 form the Myosin motor domain; the sequence is VGVSDLTLLS…SLFALEDMRD (680 aa). 129-136 contributes to the ATP binding site; that stretch reads GESGAGKT. A Phosphoserine modification is found at S357. The segment at 404-486 is actin-binding; that stretch reads SIGILDIYGF…PGILAAMNDS (83 aa). 2 consecutive IQ domains span residues 719-739 and 740-765; these read YNMAARIQRAWRRFLQRRIDA and AIKIQRTIREKKGGNKYVKLRDYGTK. The region spanning 771 to 961 is the TH1 domain; the sequence is KERRSMSLLG…TIYVRRGHPA (191 aa). 3 disordered regions span residues 951–1015, 1029–1136, and 1215–1270; these read STIY…QKPV, YNPK…GSSS, and VQFG…DDDW. The segment covering 980-1000 has biased composition (basic residues); sequence IKSKKSKHKSTHKHTHSHRSH. A compositionally biased stretch (low complexity) spans 1066–1078; the sequence is KKASSSHKSSSAK. Over residues 1089-1098 the composition is skewed to basic and acidic residues; that stretch reads GVEKNKEPLK. Residues 1107-1116 are compositionally biased toward pro residues; the sequence is PIPPPPPPMG. An SH3 domain is found at 1118–1180; sequence PKDPKFEAAY…PTAYMTPYKD (63 aa). The segment covering 1215 to 1234 has biased composition (polar residues); the sequence is VQFGSATVGPTSDNQSNPVG. The segment covering 1256–1270 has biased composition (acidic residues); it reads ADDDDNDDGDDDDDW.

This sequence belongs to the TRAFAC class myosin-kinesin ATPase superfamily. Myosin family. As to quaternary structure, interacts (via myosin motor domain) with SHE4; this interaction is important for proper localization and may regulate the interaction of the motor domain with actin. Interacts (via SH3 domain) with VRP1; this interaction is required for localization to sites of polarized growth and may regulate the interaction of the tail domain with actin. Interacts (via SH3 domain) with PAN1; this interaction is important for late stages of endocytopsis. Interacts (via SH3 domain) with BBC1 and LAS17. Interacts (via C-terminal acidic tail) with ARC19 and ARC40; ARC19 and ARC40 are Arp2/3 complex subunits. Post-translationally, phosphorylation of the TEDS site (Ser-357) is required for the polarization of the actin cytoskeleton and for ligand-induced, but not for constitutive internalization of STE2. Phosphorylation probably activates the myosin-I ATPase. Ser-357 is phosphorylated by CLA4 and STE20 in vitro.

It is found in the cytoplasm. The protein resides in the cytoskeleton. Its subcellular location is the actin patch. In terms of biological role, one of two redundant type-I myosins implicated in the organization of the actin cytoskeleton. Required for proper actin cytoskeleton polarization and for the internalization step in endocytosis. At the cell cortex, assembles in patch-like structures together with proteins from the actin-polymerizing machinery and promotes actin assembly. Functions redundantly with LAS17 as actin nucleation-promoting factor (NPF) for the Arp2/3 complex. Motor domain phosphorylation by PAK kinases CLA4 and STE20 promotes CDC42-regulated actin assembly. Functions together with the NPF PAN1 in late stages of endocytosis. Motor domain phosphorylation by PDK1 kinases PKH1 and PKH2, and by SGK kinases YPK1 and YPK2, promotes ligand-induced, but not constitutive endocytosis of the G protein-coupled receptor STE2. The chain is Myosin-3 (MYO3) from Saccharomyces cerevisiae (strain YJM789) (Baker's yeast).